The sequence spans 227 residues: 2-C-methyl-D-erythritol 4-phosphate cytidylyltransferase (227 aa).

It belongs to the IspD/TarI cytidylyltransferase family. IspD subfamily.

The catalysed reaction is 2-C-methyl-D-erythritol 4-phosphate + CTP + H(+) = 4-CDP-2-C-methyl-D-erythritol + diphosphate. Its pathway is isoprenoid biosynthesis; isopentenyl diphosphate biosynthesis via DXP pathway; isopentenyl diphosphate from 1-deoxy-D-xylulose 5-phosphate: step 2/6. In terms of biological role, catalyzes the formation of 4-diphosphocytidyl-2-C-methyl-D-erythritol from CTP and 2-C-methyl-D-erythritol 4-phosphate (MEP). The protein is 2-C-methyl-D-erythritol 4-phosphate cytidylyltransferase of Dehalococcoides mccartyi (strain CBDB1).